The sequence spans 488 residues: MFNLFLAVFPEIFIINATFILLIHGVVFSTSKKDDYPPLVSNVGWLGLLSVLITLLLLAAGAPLLTIAHLFWNNFFRRDNFTYFCQILLLLSTAGTISMCFDFFEQERFDAFEFIVLILLSTCSMLFMISAYDLIAMYLAIELQSLCFYVLAASKRKSEFSTEAGLKYLILGAFSSGILLFGCSMIYGSTGATHFDQLAKILTGYEITGARSSGIFMGILFIAVGFLFKITAVPFHMWAPDIYEGSPTPVTAFLSIAPKISIFANILRVFIYGSYGATLQQIFFFCSIASMILGALAAMAQTKVKRLLAYSSIGHVGYICIGFSCGTIEGIQSLLIGLFIYALTTINAFAIVLALRQTRVKYIADLGALAKTNPILAITFSITMFSYAGIPPLAGFCSKFYLFFAALGCGAYFLASVGVVTSVIGCFYYIRLVKRMFFDTPRTWILYEPMDRNKSLLLAMTSSFITLFFLYPSPLFSVTHQMALSLYL.

Helical transmembrane passes span 4-24 (LFLA…LLIH), 45-65 (WLGL…APLL), 84-104 (FCQI…FDFF), 111-131 (AFEF…MISA), 134-154 (LIAM…LAAS), 168-188 (YLIL…MIYG), 215-235 (IFMG…AVPF), 252-272 (AFLS…VFIY), 282-302 (IFFF…MAQT), 308-328 (LAYS…CGTI), 334-354 (LLIG…IVLA), 375-395 (ILAI…PLAG), 400-420 (FYLF…VGVV), and 456-476 (LLLA…SPLF).

This sequence belongs to the complex I subunit 2 family.

The protein resides in the mitochondrion inner membrane. The enzyme catalyses a ubiquinone + NADH + 5 H(+)(in) = a ubiquinol + NAD(+) + 4 H(+)(out). Functionally, core subunit of the mitochondrial membrane respiratory chain NADH dehydrogenase (Complex I) that is believed to belong to the minimal assembly required for catalysis. Complex I functions in the transfer of electrons from NADH to the respiratory chain. The immediate electron acceptor for the enzyme is believed to be ubiquinone. The chain is NADH-ubiquinone oxidoreductase chain 2 (ND2) from Oenothera berteroana (Bertero's evening primrose).